The chain runs to 578 residues: CTP synthase 2 (578 aa).

The Glutamine amidotransferase type-1 domain maps to 305 to 564 (KIALVGKYTN…VAAASGTLGE (260 aa)). Residues cysteine 404, histidine 537, and glutamate 539 each act as for GATase activity in the active site.

This sequence belongs to the CTP synthase family. As to quaternary structure, homodimer. Oligomerizes to a tetramer in the presence of its substrates UTP and ATP. The cofactor is Mg(2+).

It is found in the cytoplasm. It catalyses the reaction UTP + L-glutamine + ATP + H2O = CTP + L-glutamate + ADP + phosphate + 2 H(+). The protein operates within pyrimidine metabolism; CTP biosynthesis via de novo pathway; CTP from UDP: step 2/2. With respect to regulation, activated by GTP. Subject to allosteric product inhibition by CTP. Inhibited by p-chloromercuriphenylsulfonic acid, N-ethylmaleimide and cyclopentenylcytosine (CPEC). Its function is as follows. Catalyzes the ATP-dependent amination of UTP to CTP with either L-glutamine or ammonia as the source of nitrogen. Plays an important role in the regulation of phospholipid synthesis. This is CTP synthase 2 (URA8) from Saccharomyces cerevisiae (strain ATCC 204508 / S288c) (Baker's yeast).